A 162-amino-acid chain; its full sequence is Ribosome maturation factor RimP (162 aa).

This sequence belongs to the RimP family.

The protein resides in the cytoplasm. Functionally, required for maturation of 30S ribosomal subunits. This Leptospira biflexa serovar Patoc (strain Patoc 1 / Ames) protein is Ribosome maturation factor RimP.